Reading from the N-terminus, the 503-residue chain is MEFSVKSGSPEKQRSACIVVGVFEPRRLSPIAEQLDKISDGYISALLRRGELEGKPGQTLLLHHVPNVLSERILLIGCGKERELDERQYKQVIQKTINTLNDTGSMEAVCFLTELHVKGRNNYWKVRQAVETAKETLYSFDQLKTNKSEPRRPLRKMVFNVPTRRELTSGERAIQHGQAIAAGIKAAKDLGNMPPNICNAAYLASQARQLADSYSKNVITRVIGEQQMKELGMHSYLAVGQGSQNESLMSVIEYKGNASEDARPIVLVGKGLTFDSGGISIKPSEGMDEMKYDMCGAAAVYGVMRMVAELQLPINVIGVLAGCENMPGGRAYRPGDVLTTMSGQTVEVLNTDAEGRLVLCDVLTYVERFEPEAVIDVATLTGACVIALGHHITGLMTNHNPLAHELIAASEQSGDRAWRLPLGDEYQEQLESNFADMANIGGRPGGAITAGCFLSRFTRKYNWAHLDIAGTAWRSGKAKGATGRPVALLAQFLLNRAGFNGEE.

The Mn(2+) site is built by K270 and D275. K282 is an active-site residue. Mn(2+) contacts are provided by D293, D352, and E354. The active site involves R356.

Belongs to the peptidase M17 family. The cofactor is Mn(2+).

It is found in the cytoplasm. It carries out the reaction Release of an N-terminal amino acid, Xaa-|-Yaa-, in which Xaa is preferably Leu, but may be other amino acids including Pro although not Arg or Lys, and Yaa may be Pro. Amino acid amides and methyl esters are also readily hydrolyzed, but rates on arylamides are exceedingly low.. The catalysed reaction is Release of an N-terminal amino acid, preferentially leucine, but not glutamic or aspartic acids.. Presumably involved in the processing and regular turnover of intracellular proteins. Catalyzes the removal of unsubstituted N-terminal amino acids from various peptides. The chain is Probable cytosol aminopeptidase from Shigella flexneri.